The following is a 345-amino-acid chain: N-acetyl-gamma-glutamyl-phosphate reductase (345 aa).

Cys149 is a catalytic residue.

The protein belongs to the NAGSA dehydrogenase family. Type 1 subfamily.

Its subcellular location is the cytoplasm. It catalyses the reaction N-acetyl-L-glutamate 5-semialdehyde + phosphate + NADP(+) = N-acetyl-L-glutamyl 5-phosphate + NADPH + H(+). The protein operates within amino-acid biosynthesis; L-arginine biosynthesis; N(2)-acetyl-L-ornithine from L-glutamate: step 3/4. Catalyzes the NADPH-dependent reduction of N-acetyl-5-glutamyl phosphate to yield N-acetyl-L-glutamate 5-semialdehyde. In Bacillus cereus (strain ATCC 10987 / NRS 248), this protein is N-acetyl-gamma-glutamyl-phosphate reductase.